A 314-amino-acid chain; its full sequence is DNA-directed RNA polymerase subunit alpha (314 aa).

Positions 1 to 228 (MIEIEKPKIE…EHLNIFVGLT (228 aa)) are alpha N-terminal domain (alpha-NTD). Residues 245-314 (KEKVMEMTIE…DLGLGLRDDD (70 aa)) form an alpha C-terminal domain (alpha-CTD) region.

The protein belongs to the RNA polymerase alpha chain family. In terms of assembly, homodimer. The RNAP catalytic core consists of 2 alpha, 1 beta, 1 beta' and 1 omega subunit. When a sigma factor is associated with the core the holoenzyme is formed, which can initiate transcription.

It catalyses the reaction RNA(n) + a ribonucleoside 5'-triphosphate = RNA(n+1) + diphosphate. DNA-dependent RNA polymerase catalyzes the transcription of DNA into RNA using the four ribonucleoside triphosphates as substrates. This is DNA-directed RNA polymerase subunit alpha from Oceanobacillus iheyensis (strain DSM 14371 / CIP 107618 / JCM 11309 / KCTC 3954 / HTE831).